The following is a 205-amino-acid chain: Cerebellin-3 (205 aa).

The first 32 residues, 1–32, serve as a signal peptide directing secretion; it reads MLGTKRHWPPGPSLSLELPLALTLLALRAGWA. Residues 67-205 form the C1q domain; it reads APPGRVAFAA…SFSGFLIFPL (139 aa). Asn-90 is a glycosylation site (N-linked (GlcNAc...) asparagine).

Heterohexamer; disulfide-linked heterotrimers. Interacts with CBLN1. May also form oligomers with CBLN2 and CBLN4.

Its subcellular location is the endoplasmic reticulum. The protein resides in the golgi apparatus. The protein localises to the cis-Golgi network. It localises to the secreted. It is found in the synapse. Functionally, may be involved in synaptic functions in the CNS. The protein is Cerebellin-3 (CBLN3) of Bos taurus (Bovine).